Here is a 61-residue protein sequence, read N- to C-terminus: Large ribosomal subunit protein uL30 (61 aa).

The protein belongs to the universal ribosomal protein uL30 family. As to quaternary structure, part of the 50S ribosomal subunit.

This Francisella philomiragia subsp. philomiragia (strain ATCC 25017 / CCUG 19701 / FSC 153 / O#319-036) protein is Large ribosomal subunit protein uL30.